The primary structure comprises 181 residues: Protein Syd (181 aa).

The protein belongs to the Syd family.

It is found in the cell inner membrane. In terms of biological role, interacts with the SecY protein in vivo. May bind preferentially to an uncomplexed state of SecY, thus functioning either as a chelating agent for excess SecY in the cell or as a regulatory factor that negatively controls the translocase function. This chain is Protein Syd, found in Escherichia coli O157:H7.